The chain runs to 401 residues: Mu-type opioid receptor (401 aa).

Over 1–69 (MDSGAVPTNA…CPSAGSPSMI (69 aa)) the chain is Extracellular. N-linked (GlcNAc...) asparagine glycans are attached at residues Asn-9, Asn-12, Asn-34, Asn-41, and Asn-49. A helical transmembrane segment spans residues 70–94 (TAIIIMALYSIVCVVGLFGNFLVMY). The Cytoplasmic portion of the chain corresponds to 95–107 (VIVRYTKMKTATN). A helical membrane pass occupies residues 108-132 (IYIFNLALADALATSTLPFQSVNYL). Topologically, residues 133–143 (MGTWPFGTILC) are extracellular. Cysteines 143 and 220 form a disulfide. The helical transmembrane segment at 144–166 (KIVISIDYYNMFTSIFTLCTMSV) threads the bilayer. The Cytoplasmic portion of the chain corresponds to 167-186 (DRYIAVCHPVKALDLRTPRN). A Phosphotyrosine modification is found at Tyr-169. Residues 187-208 (AKIINICNWILSSAIGLPVMFM) traverse the membrane as a helical segment. Topologically, residues 209–231 (ATTKYRQGSIDCTLTFSHPTWYW) are extracellular. A helical transmembrane segment spans residues 232-256 (ENLLKICVFIFAFIMPILIITVCYG). Topologically, residues 257–280 (LMILRLKSVRMLSGSKEKDRNLRR) are cytoplasmic. The chain crosses the membrane as a helical span at residues 281–307 (ITRMVLVVVAVFIVCWTPIHIYVIIKA). The Extracellular portion of the chain corresponds to 308–315 (LITIPETT). Residues 316 to 339 (FQTVSWHFCIALGYTNSCLNPVLY) form a helical membrane-spanning segment. Positions 335–339 (NPVLY) match the NPxxY; plays a role in stabilizing the activated conformation of the receptor motif. The Cytoplasmic segment spans residues 340 to 401 (AFLDENFKRC…NLEAETTPLP (62 aa)). A lipid anchor (S-palmitoyl cysteine) is attached at Cys-354. Residues 365–389 (NSTRIRQNTRDHPSTANTVDRTNHQ) are disordered. Residue Ser-366 is modified to Phosphoserine. Residue Thr-373 is modified to Phosphothreonine. Ser-378 carries the post-translational modification Phosphoserine. Thr-397 is modified (phosphothreonine).

This sequence belongs to the G-protein coupled receptor 1 family. Forms homooligomers and heterooligomers with other GPCRs, such as OPRD1, OPRK1, OPRL1, NPFFR2, ADRA2A, SSTR2, CNR1 and CCR5 (probably in dimeric forms). Interacts with heterotrimeric G proteins; interaction with a heterotrimeric complex containing GNAI1, GNB1 and GNG2 stabilizes the active conformation of the receptor and increases its affinity for endomorphin-2, the synthetic opioid peptide DAMGO and for morphinan agonists. Interacts with PPL; the interaction disrupts agonist-mediated G-protein activation. Interacts (via C-terminus) with DNAJB4 (via C-terminus). Interacts with calmodulin; the interaction inhibits the constitutive activity of OPRM1; it abolishes basal and attenuates agonist-stimulated G-protein coupling. Interacts with FLNA, PLD2, RANBP9 and WLS and GPM6A. Interacts with RTP4. Interacts with SYP and GNAS. Interacts with RGS9, RGS17, RGS20, RGS4, PPP1R9B and HINT1. Phosphorylated. Differentially phosphorylated in basal and agonist-induced conditions. Agonist-mediated phosphorylation modulates receptor internalization. Phosphorylated by GRK2 in a agonist-dependent manner. Phosphorylation at Tyr-169 requires receptor activation, is dependent on non-receptor protein tyrosine kinase Src and results in a decrease in agonist efficacy by reducing G-protein coupling efficiency. Phosphorylated on tyrosine residues; the phosphorylation is involved in agonist-induced G-protein-independent receptor down-regulation. Phosphorylation at Ser-378 is involved in G-protein-dependent but not beta-arrestin-dependent activation of the ERK pathway. In terms of processing, ubiquitinated. A basal ubiquitination seems not to be related to degradation. Ubiquitination is increased upon formation of OPRM1:OPRD1 oligomers leading to proteasomal degradation; the ubiquitination is diminished by RTP4.

It localises to the cell membrane. The protein resides in the cell projection. The protein localises to the axon. It is found in the perikaryon. Its subcellular location is the dendrite. It localises to the endosome. In terms of biological role, receptor for endogenous opioids such as beta-endorphin and endomorphin. Receptor for natural and synthetic opioids including morphine, heroin, DAMGO, fentanyl, etorphine, buprenorphin and methadone. Also activated by enkephalin peptides, such as Met-enkephalin or Met-enkephalin-Arg-Phe, with higher affinity for Met-enkephalin-Arg-Phe. Agonist binding to the receptor induces coupling to an inactive GDP-bound heterotrimeric G-protein complex and subsequent exchange of GDP for GTP in the G-protein alpha subunit leading to dissociation of the G-protein complex with the free GTP-bound G-protein alpha and the G-protein beta-gamma dimer activating downstream cellular effectors. The agonist- and cell type-specific activity is predominantly coupled to pertussis toxin-sensitive G(i) and G(o) G alpha proteins, GNAI1, GNAI2, GNAI3 and GNAO1, and to a lesser extent to pertussis toxin-insensitive G alpha proteins GNAZ and GNA15. They mediate an array of downstream cellular responses, including inhibition of adenylate cyclase activity and both N-type and L-type calcium channels, activation of inward rectifying potassium channels, mitogen-activated protein kinase (MAPK), phospholipase C (PLC), phosphoinositide/protein kinase (PKC), phosphoinositide 3-kinase (PI3K) and regulation of NF-kappa-B. Also couples to adenylate cyclase stimulatory G alpha proteins. The selective temporal coupling to G-proteins and subsequent signaling can be regulated by RGSZ proteins, such as RGS9, RGS17 and RGS4. Phosphorylation by members of the GPRK subfamily of Ser/Thr protein kinases and association with beta-arrestins is involved in short-term receptor desensitization. Beta-arrestins associate with the GPRK-phosphorylated receptor and uncouple it from the G-protein thus terminating signal transduction. The phosphorylated receptor is internalized through endocytosis via clathrin-coated pits which involves beta-arrestins. The activation of the ERK pathway occurs either in a G-protein-dependent or a beta-arrestin-dependent manner and is regulated by agonist-specific receptor phosphorylation. Acts as a class A G-protein coupled receptor (GPCR) which dissociates from beta-arrestin at or near the plasma membrane and undergoes rapid recycling. Receptor down-regulation pathways are varying with the agonist and occur dependent or independent of G-protein coupling. Endogenous ligands induce rapid desensitization, endocytosis and recycling. Heterooligomerization with other GPCRs can modulate agonist binding, signaling and trafficking properties. Involved in neurogenesis. This is Mu-type opioid receptor (OPRM1) from Bos taurus (Bovine).